A 560-amino-acid chain; its full sequence is Formate--tetrahydrofolate ligase (560 aa).

69–76 (TPAGEGKS) contacts ATP.

Belongs to the formate--tetrahydrofolate ligase family.

It catalyses the reaction (6S)-5,6,7,8-tetrahydrofolate + formate + ATP = (6R)-10-formyltetrahydrofolate + ADP + phosphate. It participates in one-carbon metabolism; tetrahydrofolate interconversion. This Listeria innocua serovar 6a (strain ATCC BAA-680 / CLIP 11262) protein is Formate--tetrahydrofolate ligase.